The following is a 414-amino-acid chain: 3-phosphoshikimate 1-carboxyvinyltransferase (414 aa).

Residues Lys-20, Ser-21, and Arg-25 each contribute to the 3-phosphoshikimate site. Lys-20 contacts phosphoenolpyruvate. Residues Gly-85 and Arg-113 each coordinate phosphoenolpyruvate. Positions 154, 155, 156, 181, 296, and 323 each coordinate 3-phosphoshikimate. Gln-156 is a binding site for phosphoenolpyruvate. Asp-296 acts as the Proton acceptor in catalysis. The phosphoenolpyruvate site is built by Arg-327, Arg-371, and Lys-395.

It belongs to the EPSP synthase family. As to quaternary structure, monomer.

It is found in the cytoplasm. It catalyses the reaction 3-phosphoshikimate + phosphoenolpyruvate = 5-O-(1-carboxyvinyl)-3-phosphoshikimate + phosphate. The protein operates within metabolic intermediate biosynthesis; chorismate biosynthesis. Functionally, catalyzes the transfer of the enolpyruvyl moiety of phosphoenolpyruvate (PEP) to the 5-hydroxyl of shikimate-3-phosphate (S3P) to produce enolpyruvyl shikimate-3-phosphate and inorganic phosphate. The polypeptide is 3-phosphoshikimate 1-carboxyvinyltransferase (Saccharolobus islandicus (strain Y.G.57.14 / Yellowstone #1) (Sulfolobus islandicus)).